The primary structure comprises 82 residues: U17-hexatoxin-Hi1a (82 aa).

The first 21 residues, 1 to 21, serve as a signal peptide directing secretion; that stretch reads MKTIFAVTLLLFAIYVPECMP. 5 cysteine pairs are disulfide-bonded: Cys22-Cys33, Cys27-Cys48, Cys32-Cys61, Cys58-Cys69, and Cys63-Cys75.

As to expression, expressed by the venom gland.

Its subcellular location is the secreted. Its function is as follows. Probable ion channel inhibitor. This is U17-hexatoxin-Hi1a from Hadronyche infensa (Fraser island funnel-web spider).